The following is a 240-amino-acid chain: Phosphoribosylaminoimidazole-succinocarboxamide synthase (240 aa).

The protein belongs to the SAICAR synthetase family.

It carries out the reaction 5-amino-1-(5-phospho-D-ribosyl)imidazole-4-carboxylate + L-aspartate + ATP = (2S)-2-[5-amino-1-(5-phospho-beta-D-ribosyl)imidazole-4-carboxamido]succinate + ADP + phosphate + 2 H(+). It participates in purine metabolism; IMP biosynthesis via de novo pathway; 5-amino-1-(5-phospho-D-ribosyl)imidazole-4-carboxamide from 5-amino-1-(5-phospho-D-ribosyl)imidazole-4-carboxylate: step 1/2. The sequence is that of Phosphoribosylaminoimidazole-succinocarboxamide synthase from Limosilactobacillus fermentum (strain NBRC 3956 / LMG 18251) (Lactobacillus fermentum).